Consider the following 314-residue polypeptide: Acetaldehyde dehydrogenase 1 (314 aa).

11–14 (SGNI) provides a ligand contact to NAD(+). Residue Cys-129 is the Acyl-thioester intermediate of the active site. NAD(+)-binding positions include 160–168 (SAGPGTRAN) and Asn-292.

The protein belongs to the acetaldehyde dehydrogenase family.

The enzyme catalyses acetaldehyde + NAD(+) + CoA = acetyl-CoA + NADH + H(+). The chain is Acetaldehyde dehydrogenase 1 from Nocardioides sp. (strain ATCC BAA-499 / JS614).